Reading from the N-terminus, the 1088-residue chain is Adenylate-forming reductase Nps10 (1088 aa).

The tract at residues 1–22 (MSSVSIQIPLPTPPPTQAHNSQ) is disordered. Residues 38–451 (FDWHSKNSPN…KIFGRTDDQI (414 aa)) form an adenylation (A) domain region. AMP-binding positions include His261, 357-358 (NL), Thr362, and 443-446 (IFGR). The Carrier domain occupies 586–668 (AWDSAKTLGF…SLASFVSSVA (83 aa)). At Ser621 the chain carries O-(pantetheine 4'-phosphoryl)serine. Residues 712-951 (LTGSTGALGS…IPVNVAAAAI (240 aa)) are reductase (R) domain. NADP(+) contacts are provided by residues 716–719 (TGAL), 804–806 (NAW), Tyr875, and Lys879.

Belongs to the adenylate-forming reductase family.

In terms of biological role, adenylate-forming reductase, a natural product biosynthesis enzyme that resembles non-ribosomal peptide synthetases, yet serves to modify one substrate, rather than to condense two or more building blocks. The A-domain preferentially accepts phenylpyruvic acid and benzoic acid as substrate. The natural product of the enzyme is not yet known. In Heterobasidion annosum (Root rot fungus), this protein is Adenylate-forming reductase Nps10.